The chain runs to 186 residues: Putative 3-methyladenine DNA glycosylase (186 aa).

Belongs to the DNA glycosylase MPG family.

The protein is Putative 3-methyladenine DNA glycosylase of Borreliella burgdorferi (strain ATCC 35210 / DSM 4680 / CIP 102532 / B31) (Borrelia burgdorferi).